Reading from the N-terminus, the 91-residue chain is Small ribosomal subunit protein uS15 (91 aa).

Belongs to the universal ribosomal protein uS15 family. Part of the 30S ribosomal subunit. Forms a bridge to the 50S subunit in the 70S ribosome, contacting the 23S rRNA.

One of the primary rRNA binding proteins, it binds directly to 16S rRNA where it helps nucleate assembly of the platform of the 30S subunit by binding and bridging several RNA helices of the 16S rRNA. Functionally, forms an intersubunit bridge (bridge B4) with the 23S rRNA of the 50S subunit in the ribosome. This is Small ribosomal subunit protein uS15 from Amoebophilus asiaticus (strain 5a2).